Consider the following 170-residue polypeptide: Sec-independent protein translocase protein TATA, chloroplastic (170 aa).

The N-terminal 61 residues, 1 to 61, are a transit peptide targeting the chloroplast; that stretch reads MGIPVVVPVA…GGSGGDLAAV (61 aa). Residues 62–84 lie on the Lumenal side of the membrane; sequence AASVAARPRRAGSGGGGALGCKC. A helical transmembrane segment spans residues 85-105; sequence LFGLGVPELAVIAGVAALVFG. Residues 106 to 170 lie on the Stromal side of the membrane; that stretch reads PKQLPEIGRS…LEASSSKESA (65 aa). Residues 130-139 are compositionally biased toward basic and acidic residues; it reads FETELKKEPG. Positions 130–170 are disordered; it reads FETELKKEPGEGGDQPPPATPTAVSGGEEKGLEASSSKESA.

It belongs to the TatA/E family. As to quaternary structure, in thylakoid membranes, TATC and TATB form a large receptor complex, containing about eight TATC-TATB pairs, which binds the precursor protein. Twin arginine signal peptide promotes pH-triggered docking of TATA oligomers to TATC-TATB receptor complex, inducing a conformational switch of TATA that results in activation of the translocase. TATA dissociates from TATC-TATB upon completion of translocation.

Its subcellular location is the plastid. It is found in the chloroplast thylakoid membrane. Part of the twin-arginine translocation (Tat) system that transports large folded proteins containing a characteristic twin-arginine motif in their signal peptide across the thylakoid membrane. Involved in delta pH-dependent protein transport required for chloroplast development, especially thylakoid membrane formation. TATC and TATB mediate precursor recognition, whereas TATA facilitates translocation. The sequence is that of Sec-independent protein translocase protein TATA, chloroplastic from Zea mays (Maize).